The primary structure comprises 135 residues: uncharacterized protein (135 aa).

The 99-residue stretch at 25-123 folds into the HTH hxlR-type domain; that stretch reads CPIQHVVDLL…LGSDWLEQES (99 aa).

This is an uncharacterized protein from Synechocystis sp. (strain ATCC 27184 / PCC 6803 / Kazusa).